The sequence spans 232 residues: Ribosome maturation protein SDO1 homolog (232 aa).

This sequence belongs to the SDO1/SBDS family.

The chain is Ribosome maturation protein SDO1 homolog from Methanothermobacter thermautotrophicus (strain ATCC 29096 / DSM 1053 / JCM 10044 / NBRC 100330 / Delta H) (Methanobacterium thermoautotrophicum).